The following is a 229-amino-acid chain: Potassium/proton antiporter CemA (229 aa).

The next 3 membrane-spanning stretches (helical) occupy residues 7 to 27 (FSPI…YLSF), 106 to 126 (MILR…FYIW), and 189 to 209 (IISG…KYWI).

The protein belongs to the CemA family.

Its subcellular location is the plastid membrane. The catalysed reaction is K(+)(in) + H(+)(out) = K(+)(out) + H(+)(in). May be involved in proton extrusion. The polypeptide is Potassium/proton antiporter CemA (Cuscuta reflexa (Southern Asian dodder)).